We begin with the raw amino-acid sequence, 197 residues long: Nucleoside triphosphate pyrophosphatase (197 aa).

Aspartate 75 (proton acceptor) is an active-site residue.

The protein belongs to the Maf family. Requires a divalent metal cation as cofactor.

The protein localises to the cytoplasm. The catalysed reaction is a ribonucleoside 5'-triphosphate + H2O = a ribonucleoside 5'-phosphate + diphosphate + H(+). It carries out the reaction a 2'-deoxyribonucleoside 5'-triphosphate + H2O = a 2'-deoxyribonucleoside 5'-phosphate + diphosphate + H(+). Nucleoside triphosphate pyrophosphatase. May have a dual role in cell division arrest and in preventing the incorporation of modified nucleotides into cellular nucleic acids. This Haemophilus ducreyi (strain 35000HP / ATCC 700724) protein is Nucleoside triphosphate pyrophosphatase.